Consider the following 447-residue polypeptide: ATP-dependent protease ATPase subunit HslU (447 aa).

ATP contacts are provided by residues Ile18, 60–65 (GVGKTE), Asp259, Glu325, and Arg397.

This sequence belongs to the ClpX chaperone family. HslU subfamily. In terms of assembly, a double ring-shaped homohexamer of HslV is capped on each side by a ring-shaped HslU homohexamer. The assembly of the HslU/HslV complex is dependent on binding of ATP.

It localises to the cytoplasm. Its function is as follows. ATPase subunit of a proteasome-like degradation complex; this subunit has chaperone activity. The binding of ATP and its subsequent hydrolysis by HslU are essential for unfolding of protein substrates subsequently hydrolyzed by HslV. HslU recognizes the N-terminal part of its protein substrates and unfolds these before they are guided to HslV for hydrolysis. In Burkholderia cenocepacia (strain HI2424), this protein is ATP-dependent protease ATPase subunit HslU.